The following is a 481-amino-acid chain: Cysteine--tRNA ligase (481 aa).

Cysteine 43 contacts Zn(2+). The short motif at 45 to 55 is the 'HIGH' region element; sequence ATVQGLPHIGH. Positions 221, 246, and 250 each coordinate Zn(2+). The 'KMSKS' region signature appears at 277–281; the sequence is KMSKS. Lysine 280 is a binding site for ATP.

The protein belongs to the class-I aminoacyl-tRNA synthetase family. Monomer. Zn(2+) is required as a cofactor.

The protein resides in the cytoplasm. The enzyme catalyses tRNA(Cys) + L-cysteine + ATP = L-cysteinyl-tRNA(Cys) + AMP + diphosphate. This Mycobacterium sp. (strain KMS) protein is Cysteine--tRNA ligase.